Reading from the N-terminus, the 94-residue chain is MFTINAEVRAVQGKGASRRLRAANKFPAIIYGGEAAPVAIEMDQDKVWNQQTKEGFYTEVLTIVIDGKEEKVKVQAVQRHPFKPKLSHVDFVRA.

The protein belongs to the bacterial ribosomal protein bL25 family. Part of the 50S ribosomal subunit; part of the 5S rRNA/L5/L18/L25 subcomplex. Contacts the 5S rRNA. Binds to the 5S rRNA independently of L5 and L18.

In terms of biological role, this is one of the proteins that binds to the 5S RNA in the ribosome where it forms part of the central protuberance. The sequence is that of Large ribosomal subunit protein bL25 from Enterobacter sp. (strain 638).